The sequence spans 249 residues: 1-(5-phosphoribosyl)-5-[(5-phosphoribosylamino)methylideneamino] imidazole-4-carboxamide isomerase (249 aa).

The Proton acceptor role is filled by D8. D129 (proton donor) is an active-site residue.

Belongs to the HisA/HisF family.

It is found in the cytoplasm. It carries out the reaction 1-(5-phospho-beta-D-ribosyl)-5-[(5-phospho-beta-D-ribosylamino)methylideneamino]imidazole-4-carboxamide = 5-[(5-phospho-1-deoxy-D-ribulos-1-ylimino)methylamino]-1-(5-phospho-beta-D-ribosyl)imidazole-4-carboxamide. It functions in the pathway amino-acid biosynthesis; L-histidine biosynthesis; L-histidine from 5-phospho-alpha-D-ribose 1-diphosphate: step 4/9. This Nitratidesulfovibrio vulgaris (strain ATCC 29579 / DSM 644 / CCUG 34227 / NCIMB 8303 / VKM B-1760 / Hildenborough) (Desulfovibrio vulgaris) protein is 1-(5-phosphoribosyl)-5-[(5-phosphoribosylamino)methylideneamino] imidazole-4-carboxamide isomerase.